The following is a 187-amino-acid chain: Peptidyl-tRNA hydrolase (187 aa).

Residue histidine 14 participates in tRNA binding. Histidine 19 functions as the Proton acceptor in the catalytic mechanism. Residues tyrosine 62, asparagine 64, and asparagine 110 each contribute to the tRNA site.

This sequence belongs to the PTH family. Monomer.

It localises to the cytoplasm. It carries out the reaction an N-acyl-L-alpha-aminoacyl-tRNA + H2O = an N-acyl-L-amino acid + a tRNA + H(+). Hydrolyzes ribosome-free peptidyl-tRNAs (with 1 or more amino acids incorporated), which drop off the ribosome during protein synthesis, or as a result of ribosome stalling. In terms of biological role, catalyzes the release of premature peptidyl moieties from peptidyl-tRNA molecules trapped in stalled 50S ribosomal subunits, and thus maintains levels of free tRNAs and 50S ribosomes. The sequence is that of Peptidyl-tRNA hydrolase from Chlorobaculum tepidum (strain ATCC 49652 / DSM 12025 / NBRC 103806 / TLS) (Chlorobium tepidum).